We begin with the raw amino-acid sequence, 443 residues long: Glutamate--tRNA ligase 1 (443 aa).

A 'HIGH' region motif is present at residues 9 to 19; the sequence is PSPTGYLHVGN. Residues 238–242 carry the 'KMSKS' region motif; sequence KISKR. Lysine 241 provides a ligand contact to ATP.

The protein belongs to the class-I aminoacyl-tRNA synthetase family. Glutamate--tRNA ligase type 1 subfamily. As to quaternary structure, monomer.

It localises to the cytoplasm. It catalyses the reaction tRNA(Glu) + L-glutamate + ATP = L-glutamyl-tRNA(Glu) + AMP + diphosphate. In terms of biological role, catalyzes the attachment of glutamate to tRNA(Glu) in a two-step reaction: glutamate is first activated by ATP to form Glu-AMP and then transferred to the acceptor end of tRNA(Glu). The protein is Glutamate--tRNA ligase 1 of Ehrlichia ruminantium (strain Welgevonden).